The primary structure comprises 144 residues: Large ribosomal subunit protein uL16 (144 aa).

The protein belongs to the universal ribosomal protein uL16 family. As to quaternary structure, part of the 50S ribosomal subunit.

Binds 23S rRNA and is also seen to make contacts with the A and possibly P site tRNAs. The protein is Large ribosomal subunit protein uL16 of Thermoanaerobacter sp. (strain X514).